The following is a 469-amino-acid chain: Ribulose bisphosphate carboxylase large chain (469 aa).

N6,N6,N6-trimethyllysine is present on Lys5. Positions 114 and 164 each coordinate substrate. Lys166 serves as the catalytic Proton acceptor. Lys168 provides a ligand contact to substrate. Mg(2+) is bound by residues Lys192, Asp194, and Glu195. Lys192 carries the post-translational modification N6-carboxylysine. The active-site Proton acceptor is the His285. 3 residues coordinate substrate: Arg286, His318, and Ser370.

This sequence belongs to the RuBisCO large chain family. Type I subfamily. Heterohexadecamer of 8 large chains and 8 small chains; disulfide-linked. The disulfide link is formed within the large subunit homodimers. Mg(2+) is required as a cofactor. The disulfide bond which can form in the large chain dimeric partners within the hexadecamer appears to be associated with oxidative stress and protein turnover.

Its subcellular location is the plastid. It localises to the chloroplast. The enzyme catalyses 2 (2R)-3-phosphoglycerate + 2 H(+) = D-ribulose 1,5-bisphosphate + CO2 + H2O. It catalyses the reaction D-ribulose 1,5-bisphosphate + O2 = 2-phosphoglycolate + (2R)-3-phosphoglycerate + 2 H(+). RuBisCO catalyzes two reactions: the carboxylation of D-ribulose 1,5-bisphosphate, the primary event in carbon dioxide fixation, as well as the oxidative fragmentation of the pentose substrate in the photorespiration process. Both reactions occur simultaneously and in competition at the same active site. The polypeptide is Ribulose bisphosphate carboxylase large chain (Antirhea lucida (Palo iloron)).